The chain runs to 257 residues: Probable amino-acid ABC transporter ATP-binding protein y4tH (257 aa).

Positions 6 to 251 (IVFDKVKKAY…PKEERTREFL (246 aa)) constitute an ABC transporter domain. Residue 38-45 (GPSGSGKS) participates in ATP binding.

It belongs to the ABC transporter superfamily.

It is found in the cell inner membrane. Its function is as follows. Probably part of a binding-protein-dependent transport system y4tEFGH for an amino acid. Probably responsible for energy coupling to the transport system. This chain is Probable amino-acid ABC transporter ATP-binding protein y4tH, found in Sinorhizobium fredii (strain NBRC 101917 / NGR234).